The sequence spans 451 residues: uncharacterized protein (451 aa).

The disordered stretch occupies residues 415–435 (AHGDTEWLPPPHLDHGQPRVN).

This sequence belongs to the Rv1128c/1148c/1588c/1702c/1945/3466 family.

This is an uncharacterized protein from Mycobacterium tuberculosis (strain ATCC 25618 / H37Rv).